The chain runs to 234 residues: Small ribosomal subunit protein eS4 (234 aa).

In terms of domain architecture, S4 RNA-binding; degenerate spans 38 to 99 (IPLLIALRDY…GNDYLVSYDR (62 aa)).

Belongs to the eukaryotic ribosomal protein eS4 family.

The polypeptide is Small ribosomal subunit protein eS4 (rps4e) (Picrophilus torridus (strain ATCC 700027 / DSM 9790 / JCM 10055 / NBRC 100828 / KAW 2/3)).